A 603-amino-acid chain; its full sequence is Sulfoacetaldehyde acetyltransferase (603 aa).

Belongs to the TPP enzyme family. The cofactor is Mg(2+). Requires thiamine diphosphate as cofactor.

The catalysed reaction is acetyl phosphate + sulfite + H(+) = sulfoacetaldehyde + phosphate. Its function is as follows. Catalyzes the degradation of sulfoacetaldehyde into sulfite and acetyl phosphate. Involved in sulfolactate degradation. In Roseovarius nubinhibens (strain ATCC BAA-591 / DSM 15170 / ISM), this protein is Sulfoacetaldehyde acetyltransferase.